Here is a 102-residue protein sequence, read N- to C-terminus: Small ribosomal subunit protein uS10 (102 aa).

Belongs to the universal ribosomal protein uS10 family. Part of the 30S ribosomal subunit.

Functionally, involved in the binding of tRNA to the ribosomes. This chain is Small ribosomal subunit protein uS10, found in Desulfitobacterium hafniense (strain DSM 10664 / DCB-2).